The sequence spans 390 residues: Cathepsin D (390 aa).

The propeptide at 1–44 (VIRIPLHKFTSIRRTMSEAAGXVXXLIAKGPISKYATGEPAVRQ) is activation peptide. Residues 59–385 (YYGEIGIGTP…DRDQNRVGLA (327 aa)) enclose the Peptidase A1 domain. 2 cysteine pairs are disulfide-bonded: cysteine 71–cysteine 140 and cysteine 90–cysteine 97. Aspartate 77 is an active-site residue. N-linked (GlcNAc...) asparagine glycosylation is found at asparagine 114 and asparagine 241. A disulfide bridge links cysteine 264 with cysteine 268. Residue aspartate 273 is part of the active site. A disulfide bridge links cysteine 307 with cysteine 344.

This sequence belongs to the peptidase A1 family. Consists of a light chain and a heavy chain. Interacts with ADAM30; this leads to activation of CTSD. Interacts with GRN; stabilizes CTSD; increases its proteolytic activity. Post-translationally, N- and O-glycosylated. In terms of processing, undergoes proteolytic cleavage and activation by ADAM30.

It localises to the lysosome. Its subcellular location is the melanosome. The protein resides in the secreted. It is found in the extracellular space. The enzyme catalyses Specificity similar to, but narrower than, that of pepsin A. Does not cleave the 4-Gln-|-His-5 bond in B chain of insulin.. Functionally, acid protease active in intracellular protein breakdown. Plays a role in APP processing following cleavage and activation by ADAM30 which leads to APP degradation. In Bos taurus (Bovine), this protein is Cathepsin D (CTSD).